The chain runs to 171 residues: S-ribosylhomocysteine lyase (171 aa).

Positions 54, 58, and 128 each coordinate Fe cation.

Belongs to the LuxS family. Homodimer. Fe cation is required as a cofactor.

The catalysed reaction is S-(5-deoxy-D-ribos-5-yl)-L-homocysteine = (S)-4,5-dihydroxypentane-2,3-dione + L-homocysteine. Functionally, involved in the synthesis of autoinducer 2 (AI-2) which is secreted by bacteria and is used to communicate both the cell density and the metabolic potential of the environment. The regulation of gene expression in response to changes in cell density is called quorum sensing. Catalyzes the transformation of S-ribosylhomocysteine (RHC) to homocysteine (HC) and 4,5-dihydroxy-2,3-pentadione (DPD). The sequence is that of S-ribosylhomocysteine lyase from Salmonella typhi.